The primary structure comprises 258 residues: Tryptophan synthase alpha chain (258 aa).

Active-site proton acceptor residues include Glu-44 and Asp-55.

This sequence belongs to the TrpA family. As to quaternary structure, tetramer of two alpha and two beta chains.

It catalyses the reaction (1S,2R)-1-C-(indol-3-yl)glycerol 3-phosphate + L-serine = D-glyceraldehyde 3-phosphate + L-tryptophan + H2O. It participates in amino-acid biosynthesis; L-tryptophan biosynthesis; L-tryptophan from chorismate: step 5/5. The alpha subunit is responsible for the aldol cleavage of indoleglycerol phosphate to indole and glyceraldehyde 3-phosphate. The sequence is that of Tryptophan synthase alpha chain from Petrotoga mobilis (strain DSM 10674 / SJ95).